A 263-amino-acid polypeptide reads, in one-letter code: Lens fiber major intrinsic protein (263 aa).

Residues 1–9 (MWELRSASF) are Cytoplasmic-facing. Residues 10 to 29 (WRAIFAEFFATLFYVFFGLG) traverse the membrane as a helical segment. The Extracellular segment spans residues 30-41 (ASLRWAPGPLHV). The helical transmembrane segment at 42-59 (LQVALAFGLALATLVQAV) threads the bilayer. The Cytoplasmic segment spans residues 60-61 (GH). Positions 62 to 77 (ISGAHVNPAVTFAFLV) form an intramembrane region, discontinuously helical. The NPA 1 signature appears at 68–70 (NPA). Residues 78–82 (GSQMS) are Cytoplasmic-facing. Residues 83–106 (LLRAICYMAAQLLGAVAGAAVLYS) traverse the membrane as a helical segment. Residues 107 to 127 (VTPAAVRGNLALNTLHPGVSL) lie on the Extracellular side of the membrane. A helical membrane pass occupies residues 128-148 (GQATTVEIFLTLQFVLCIFAT). Over 149–156 (YDERRNGR) the chain is Cytoplasmic. Residues 157–175 (LGSVALAVGFSLTLGHLFG) traverse the membrane as a helical segment. Residues 176–178 (MYY) are Extracellular-facing. Positions 179 to 193 (TGAGMNPARSFAPAI) form an intramembrane region, discontinuously helical. The NPA 2 motif lies at 184–186 (NPA). At 194–200 (LTRNFTN) the chain is on the extracellular side. Residues 201-222 (HWVYWVGPIIGGGLASLLYDFL) form a helical membrane-spanning segment. At 223 to 263 (LFPRLKSVSERLSILKGARPSDSNGQPEGTGEPVELKTQAL) the chain is on the cytoplasmic side. The segment at 227–237 (LKSVSERLSIL) is interaction with CALM. Phosphoserine is present on residues S235, S243, and S245. Residues 240 to 263 (ARPSDSNGQPEGTGEPVELKTQAL) are disordered. N246 bears the Deamidated asparagine mark.

It belongs to the MIP/aquaporin (TC 1.A.8) family. In terms of assembly, homotetramer; each monomer provides an independent water pore. Two homotetramers on opposing membranes can dimerize, forming a cell-cell junction. Interacts with CALM; the calcium-calmodulin/CALM complex interacts with the cytoplasmic domains of two aquaporins, leading to channel closure. Interacts with BFSP1 (via C-terminus); prevents calcium-dependent inhibition of the water channel activity. Post-translationally, subject to partial proteolytic cleavage in the eye lens core. Partial proteolysis promotes interactions between tetramers from adjoining membranes. Fatty acylated at Met-1 and Lys-238. The acyl modifications, in decreasing order of ion abundance, are: oleoyl (C18:1) &gt; palmitoyl (C16:0) &gt; stearoyl (C18:0) &gt; eicosenoyl (C20:1) &gt; dihomo-gamma-linolenoyl (C20:3) &gt; palmitoleoyl (C16:1) &gt; eicosadienoyl (C20:2).

It is found in the cell membrane. The protein resides in the cell junction. It carries out the reaction H2O(in) = H2O(out). Its activity is regulated as follows. The water channel activity is inhibited by calcium through calmodulin/CALM. In terms of biological role, aquaporins form homotetrameric transmembrane channels, with each monomer independently mediating water transport across the plasma membrane along its osmotic gradient. Specifically expressed in lens fiber cells, this aquaporin is crucial for maintaining lens water homeostasis and transparency. Beyond water permeability, it also acts as a cell-to-cell adhesion molecule, forming thin junctions between lens fiber cells that are essential for maintaining the ordered structure and transparency of the lens. The protein is Lens fiber major intrinsic protein of Oryctolagus cuniculus (Rabbit).